The following is a 241-amino-acid chain: Uracil-DNA glycosylase (241 aa).

Asp-71 serves as the catalytic Proton acceptor.

This sequence belongs to the uracil-DNA glycosylase (UDG) superfamily. UNG family.

It is found in the cytoplasm. The enzyme catalyses Hydrolyzes single-stranded DNA or mismatched double-stranded DNA and polynucleotides, releasing free uracil.. Its function is as follows. Excises uracil residues from the DNA which can arise as a result of misincorporation of dUMP residues by DNA polymerase or due to deamination of cytosine. In Xanthomonas euvesicatoria pv. vesicatoria (strain 85-10) (Xanthomonas campestris pv. vesicatoria), this protein is Uracil-DNA glycosylase.